A 586-amino-acid chain; its full sequence is Glutamate--tRNA ligase (586 aa).

The disordered stretch occupies residues 84–111; the sequence is LTDIESEDTTDTYDLPSLPGVSDDEPTQ. Positions 85-94 are enriched in acidic residues; that stretch reads TDIESEDTTD. Positions 119-129 match the 'HIGH' region motif; sequence PNPNGPWHIGH.

The protein belongs to the class-I aminoacyl-tRNA synthetase family. Glutamate--tRNA ligase type 2 subfamily.

The protein localises to the cytoplasm. It catalyses the reaction tRNA(Glu) + L-glutamate + ATP = L-glutamyl-tRNA(Glu) + AMP + diphosphate. Functionally, catalyzes the attachment of glutamate to tRNA(Glu) in a two-step reaction: glutamate is first activated by ATP to form Glu-AMP and then transferred to the acceptor end of tRNA(Glu). The chain is Glutamate--tRNA ligase from Haloquadratum walsbyi (strain DSM 16790 / HBSQ001).